Consider the following 267-residue polypeptide: MVTMKDLLECGVHFGHQTRRWNPKMKPFIFGVRKNIHIIDLQKTLRYFRYTYNIVRDAAKEGKTILFVGTKKQAKNAIEEYAKKCGMPYVNSRWLGGTLTNFNTIKKSIRKLEIIEEMEKTGQMDLLTKKEALMLRRKKEKLENFLGGIRDMKGLPDMLFIIDAVREHIAVKEGNKLGIPIVAPLDTNCDPDLIDYPIPGNDDAIRSIQLFCKEMAEAIIEGKELREQELEGEEQEEAAPATEEEKKELIEEAVAEGEAEETEEEEK.

The segment at 225-267 (LREQELEGEEQEEAAPATEEEKKELIEEAVAEGEAEETEEEEK) is disordered. The span at 251–267 (EEAVAEGEAEETEEEEK) shows a compositional bias: acidic residues.

Belongs to the universal ribosomal protein uS2 family.

This Nitratiruptor sp. (strain SB155-2) protein is Small ribosomal subunit protein uS2.